Reading from the N-terminus, the 381-residue chain is MPFSNSHNTQKLRFPAEDEFPDLSSHNNHMAKVLTPELYAELRAKCTPSGFTLDDAIQTGVDNPGHPYIMTVGAVAGDEESYDVFKDLFDPIIEERHGGYQPSDEHKTDLNPDNLQGGDDLDPNYVLSSRVRTGRSIRGFCLPPHCSRGERRAIEKLAVEALSSLDGDLSGRYYALKSMTEAEQQQLIDDHFLFDKPVSPLLLASGMARDWPDARGIWHNDNKTFLVWINEEDHLRVISMQKGGNMKEVFTRFCTGLTQIETLFKSKNYEFMWNPHLGYILTCPSNLGTGLRAGVHIKLPHLGKHEKFSEVLKRLRLQKRGTGGVDTAAVGGVFDVSNADRLGFSEVELVQMVVDGVKLLIEMEQRLEQGQAIDDLMPAQK.

Residue S4 is modified to Phosphoserine. The Phosphagen kinase N-terminal domain maps to K11–G98. The residue at position 35 (T35) is a Phosphothreonine. Residue K45 forms a Glycyl lysine isopeptide (Lys-Gly) (interchain with G-Cter in ubiquitin) linkage. V72 contributes to the creatine binding site. Positions R96–L110 are enriched in basic and acidic residues. A disordered region spans residues R96–P123. A Glycyl lysine isopeptide (Lys-Gly) (interchain with G-Cter in ubiquitin) cross-link involves residue K107. A Phosphotyrosine modification is found at Y125. Residues Y125–L367 enclose the Phosphagen kinase C-terminal domain. ATP is bound by residues S128 to R132, R130, R132, and H191. An internal MTS-like signal region spans residues R130–R138. S199 carries the post-translational modification Phosphoserine. E232 is a creatine binding site. R236 is an ATP binding site. Y269 bears the 3'-nitrotyrosine mark. S285 contacts creatine. R292 is a binding site for ATP. Phosphoserine is present on S309. ATP contacts are provided by residues R320, R320–V325, and D335. T322 bears the Phosphothreonine mark. A Glycyl lysine isopeptide (Lys-Gly) (interchain with G-Cter in ubiquitin) cross-link involves residue K381.

The protein belongs to the ATP:guanido phosphotransferase family. In terms of assembly, dimer of identical or non-identical chains, which can be either B (brain type) or M (muscle type). With MM being the major form in skeletal muscle and myocardium, MB existing in myocardium, and BB existing in many tissues, especially brain. Interacts with SLC12A6 (via C-terminus); the interaction may be required for SLC12A6 potassium-chloride cotransport activity. Post-translationally, ubiquitinated by the ECS(ASB9) complex, leading to its degradation by the proteasome. Expressed in hippocampus and corpus callosum (at protein level).

The protein resides in the cytoplasm. It localises to the cytosol. It is found in the mitochondrion. The protein localises to the cell membrane. The catalysed reaction is creatine + ATP = N-phosphocreatine + ADP + H(+). Functionally, reversibly catalyzes the transfer of phosphate between ATP and various phosphogens (e.g. creatine phosphate). Creatine kinase isoenzymes play a central role in energy transduction in tissues with large, fluctuating energy demands, such as skeletal muscle, heart, brain and spermatozoa. Acts as a key regulator of adaptive thermogenesis as part of the futile creatine cycle: localizes to the mitochondria of thermogenic fat cells and acts by mediating phosphorylation of creatine to initiate a futile cycle of creatine phosphorylation and dephosphorylation. During the futile creatine cycle, creatine and N-phosphocreatine are in a futile cycle, which dissipates the high energy charge of N-phosphocreatine as heat without performing any mechanical or chemical work. This is Creatine kinase B-type from Mus musculus (Mouse).